Reading from the N-terminus, the 457-residue chain is Acetylcholine receptor subunit alpha-1-B (457 aa).

An N-terminal signal peptide occupies residues 1-20; it reads MDYTASCLIFLFIAAGTVFG. The Extracellular segment spans residues 21 to 230; the sequence is TDHETRLIGD…ITYHFVLQRL (210 aa). Cystine bridges form between C148–C162 and C212–C213. N-linked (GlcNAc...) asparagine glycosylation occurs at N161. A run of 3 helical transmembrane segments spans residues 231–255, 263–281, and 297–316; these read PLYFIVNVIIPCLLFSFLTGLVFYL, MTLSISVLLSLTVFLLVIV, and YMLFTMVFVIASIIITVIVI. Over 317–428 the chain is Cytoplasmic; sequence NTHHRSPSTH…WKFVAMVLDH (112 aa). Residues 429 to 447 form a helical membrane-spanning segment; the sequence is ILLAVFMTVCVIGTLAVFA.

This sequence belongs to the ligand-gated ion channel (TC 1.A.9) family. Acetylcholine receptor (TC 1.A.9.1) subfamily. Alpha-1/CHRNA1 sub-subfamily. In terms of assembly, one of the alpha chains that assemble within the acetylcholine receptor, a pentamer of two alpha chains, a beta, a delta, and a gamma or epsilon chains.

It localises to the postsynaptic cell membrane. The protein localises to the cell membrane. It catalyses the reaction K(+)(in) = K(+)(out). The catalysed reaction is Na(+)(in) = Na(+)(out). Functionally, upon acetylcholine binding, the AChR responds by an extensive change in conformation that affects all subunits and leads to opening of an ion-conducting channel across the plasma membrane. The sequence is that of Acetylcholine receptor subunit alpha-1-B (chrna1-b) from Xenopus laevis (African clawed frog).